The chain runs to 725 residues: ABC transporter G family member 19 (725 aa).

Residues 73–325 (LNFNNLQYDV…FSDFGRPIPE (253 aa)) enclose the ABC transporter domain. 117 to 124 (GASGAGKS) contacts ATP. The region spanning 419-629 (FETFILAKRY…PYEAVLINEF (211 aa)) is the ABC transmembrane type-2 domain. 7 helical membrane passes run 438 to 458 (LVGT…TVYW), 473 to 493 (LFAF…PVFI), 515 to 535 (ISHS…FSAI), 537 to 557 (FWTV…LLIY), 577 to 597 (IMLC…LSGF), 606 to 626 (FYWT…AVLI), and 698 to 718 (LWIT…ALLF).

Belongs to the ABC transporter superfamily. ABCG family. Eye pigment precursor importer (TC 3.A.1.204) subfamily.

The protein resides in the vacuole membrane. Functionally, confers selective resistance to kanamycin. The sequence is that of ABC transporter G family member 19 (ABCG19) from Arabidopsis thaliana (Mouse-ear cress).